The sequence spans 208 residues: Small ribosomal subunit protein uS4 (208 aa).

The S4 RNA-binding domain maps to Thr-97 to Leu-160.

It belongs to the universal ribosomal protein uS4 family. Part of the 30S ribosomal subunit. Contacts protein S5. The interaction surface between S4 and S5 is involved in control of translational fidelity.

Its function is as follows. One of the primary rRNA binding proteins, it binds directly to 16S rRNA where it nucleates assembly of the body of the 30S subunit. In terms of biological role, with S5 and S12 plays an important role in translational accuracy. The polypeptide is Small ribosomal subunit protein uS4 (Xanthomonas axonopodis pv. citri (strain 306)).